Reading from the N-terminus, the 221-residue chain is Octanoyltransferase (221 aa).

Positions 31 to 216 (GQIGDTLLLL…SLCAIFDLRP (186 aa)) constitute a BPL/LPL catalytic domain. Residues 76–83 (RGGEVTYH), 145–147 (AIG), and 159–161 (GLA) contribute to the substrate site. The active-site Acyl-thioester intermediate is cysteine 177.

Belongs to the LipB family.

It localises to the cytoplasm. The catalysed reaction is octanoyl-[ACP] + L-lysyl-[protein] = N(6)-octanoyl-L-lysyl-[protein] + holo-[ACP] + H(+). It participates in protein modification; protein lipoylation via endogenous pathway; protein N(6)-(lipoyl)lysine from octanoyl-[acyl-carrier-protein]: step 1/2. Catalyzes the transfer of endogenously produced octanoic acid from octanoyl-acyl-carrier-protein onto the lipoyl domains of lipoate-dependent enzymes. Lipoyl-ACP can also act as a substrate although octanoyl-ACP is likely to be the physiological substrate. The sequence is that of Octanoyltransferase from Chloroflexus aggregans (strain MD-66 / DSM 9485).